Here is a 762-residue protein sequence, read N- to C-terminus: 5-methyltetrahydropteroyltriglutamate--homocysteine methyltransferase (762 aa).

Residues 17–20 (REWK) and Lys111 contribute to the 5-methyltetrahydropteroyltri-L-glutamate site. Residues 435–437 (IGS) and Glu488 contribute to the L-homocysteine site. L-methionine is bound by residues 435 to 437 (IGS) and Glu488. 5-methyltetrahydropteroyltri-L-glutamate contacts are provided by residues 519-520 (RC) and Trp565. Residue Asp603 coordinates L-homocysteine. Asp603 contributes to the L-methionine binding site. Residue Glu609 participates in 5-methyltetrahydropteroyltri-L-glutamate binding. Positions 645, 647, and 669 each coordinate Zn(2+). His698 (proton donor) is an active-site residue. Cys730 provides a ligand contact to Zn(2+).

The protein belongs to the vitamin-B12 independent methionine synthase family. Zn(2+) serves as cofactor.

The enzyme catalyses 5-methyltetrahydropteroyltri-L-glutamate + L-homocysteine = tetrahydropteroyltri-L-glutamate + L-methionine. It participates in amino-acid biosynthesis; L-methionine biosynthesis via de novo pathway; L-methionine from L-homocysteine (MetE route): step 1/1. Functionally, catalyzes the transfer of a methyl group from 5-methyltetrahydrofolate to homocysteine resulting in methionine formation. The sequence is that of 5-methyltetrahydropteroyltriglutamate--homocysteine methyltransferase from Bacillus anthracis (strain A0248).